The sequence spans 367 residues: Phosphoribosylaminoimidazole-succinocarboxamide synthase (367 aa).

It belongs to the SAICAR synthetase family.

The enzyme catalyses 5-amino-1-(5-phospho-D-ribosyl)imidazole-4-carboxylate + L-aspartate + ATP = (2S)-2-[5-amino-1-(5-phospho-beta-D-ribosyl)imidazole-4-carboxamido]succinate + ADP + phosphate + 2 H(+). The protein operates within purine metabolism; IMP biosynthesis via de novo pathway; 5-amino-1-(5-phospho-D-ribosyl)imidazole-4-carboxamide from 5-amino-1-(5-phospho-D-ribosyl)imidazole-4-carboxylate: step 1/2. This is Phosphoribosylaminoimidazole-succinocarboxamide synthase from Vibrio atlanticus (strain LGP32) (Vibrio splendidus (strain Mel32)).